The sequence spans 71 residues: Large ribosomal subunit protein uL29 (71 aa).

The interval 1–20 (MKARELQELRQGSSPQDLQE) is disordered.

The protein belongs to the universal ribosomal protein uL29 family.

The sequence is that of Large ribosomal subunit protein uL29 from Clostridium kluyveri (strain ATCC 8527 / DSM 555 / NBRC 12016 / NCIMB 10680 / K1).